Consider the following 310-residue polypeptide: Tyrosine recombinase XerC (310 aa).

Residues 1–92 (MDELIKEFDR…SLRAFFKYLH (92 aa)) form the Core-binding (CB) domain. The 188-residue stretch at 113-300 (YIPAVLSVDE…SVNRLMAVYD (188 aa)) folds into the Tyr recombinase domain. Catalysis depends on residues Arg153, Lys177, His252, Arg255, and His278. Tyr287 functions as the O-(3'-phospho-DNA)-tyrosine intermediate in the catalytic mechanism.

It belongs to the 'phage' integrase family. XerC subfamily. As to quaternary structure, forms a cyclic heterotetrameric complex composed of two molecules of XerC and two molecules of XerD.

It localises to the cytoplasm. In terms of biological role, site-specific tyrosine recombinase, which acts by catalyzing the cutting and rejoining of the recombining DNA molecules. The XerC-XerD complex is essential to convert dimers of the bacterial chromosome into monomers to permit their segregation at cell division. It also contributes to the segregational stability of plasmids. The protein is Tyrosine recombinase XerC of Syntrophus aciditrophicus (strain SB).